The sequence spans 136 residues: Gilles de la Tourette syndrome chromosomal region candidate gene 1 protein (136 aa).

Residues 73–93 traverse the membrane as a helical segment; sequence AICMEVFLFLWFIAPIYACVC.

The protein resides in the membrane. In Homo sapiens (Human), this protein is Gilles de la Tourette syndrome chromosomal region candidate gene 1 protein (GTSCR1).